The chain runs to 95 residues: Large ribosomal subunit protein uL23 (95 aa).

It belongs to the universal ribosomal protein uL23 family. In terms of assembly, part of the 50S ribosomal subunit. Contacts protein L29, and trigger factor when it is bound to the ribosome.

In terms of biological role, one of the early assembly proteins it binds 23S rRNA. One of the proteins that surrounds the polypeptide exit tunnel on the outside of the ribosome. Forms the main docking site for trigger factor binding to the ribosome. The chain is Large ribosomal subunit protein uL23 from Desulforapulum autotrophicum (strain ATCC 43914 / DSM 3382 / VKM B-1955 / HRM2) (Desulfobacterium autotrophicum).